A 165-amino-acid chain; its full sequence is uncharacterized protein (165 aa).

A coiled-coil region spans residues 1–38; it reads MFTVKEKNRQELEEELNDLEFQIYRMQENMKDLSKDAK.

This is an uncharacterized protein from Bacillus subtilis (strain 168).